A 249-amino-acid polypeptide reads, in one-letter code: MISNSSIEDRINKNEAYIAKFFEIFSKNDKIRFHGVSLDRKALDSFMVRNNFKKRFVSGINLPILIRLHFYKKLFTILWLTVRTVALLSHARNIQCLIQESDGDAKDVARSIYITTAEFRNYLLTEKGFYVTTRSISHFRAILDSIRYPFGKDHASKNMELLPITYDLSFCTVFHGYLTSILEAYEFFRGVFKKYKAPLSSNFIAIGKTTDESNFSQLHHYFQKFDERIRRILHLISQELDGYCRIAKQ.

It is found in the cytoplasm. It localises to the nucleus. The protein resides in the nucleolus. This is an uncharacterized protein from Schizosaccharomyces pombe (strain 972 / ATCC 24843) (Fission yeast).